The following is a 660-amino-acid chain: DNA ligase (660 aa).

NAD(+) contacts are provided by residues 33-37 (DFVYD), 82-83 (SL), and Glu-110. Catalysis depends on Lys-112, which acts as the N6-AMP-lysine intermediate. Residues Arg-133, Glu-167, Lys-281, and Lys-305 each coordinate NAD(+). Positions 396, 399, 412, and 417 each coordinate Zn(2+). A BRCT domain is found at 583-660 (GENKLLAGKK…SFEDIKSYLD (78 aa)).

It belongs to the NAD-dependent DNA ligase family. LigA subfamily. Mg(2+) is required as a cofactor. Mn(2+) serves as cofactor.

The catalysed reaction is NAD(+) + (deoxyribonucleotide)n-3'-hydroxyl + 5'-phospho-(deoxyribonucleotide)m = (deoxyribonucleotide)n+m + AMP + beta-nicotinamide D-nucleotide.. Its function is as follows. DNA ligase that catalyzes the formation of phosphodiester linkages between 5'-phosphoryl and 3'-hydroxyl groups in double-stranded DNA using NAD as a coenzyme and as the energy source for the reaction. It is essential for DNA replication and repair of damaged DNA. The protein is DNA ligase of Borreliella burgdorferi (strain ATCC 35210 / DSM 4680 / CIP 102532 / B31) (Borrelia burgdorferi).